Here is a 535-residue protein sequence, read N- to C-terminus: Formate--tetrahydrofolate ligase (535 aa).

Residue 50–57 (TPAGEGKT) participates in ATP binding.

It belongs to the formate--tetrahydrofolate ligase family.

It catalyses the reaction (6S)-5,6,7,8-tetrahydrofolate + formate + ATP = (6R)-10-formyltetrahydrofolate + ADP + phosphate. The protein operates within one-carbon metabolism; tetrahydrofolate interconversion. The polypeptide is Formate--tetrahydrofolate ligase (Picrophilus torridus (strain ATCC 700027 / DSM 9790 / JCM 10055 / NBRC 100828 / KAW 2/3)).